The following is a 422-amino-acid chain: Tyrosine--tRNA ligase (422 aa).

Tyrosine 34 serves as a coordination point for L-tyrosine. A 'HIGH' region motif is present at residues 39–48 (PTEDSLHVGH). L-tyrosine is bound by residues tyrosine 172 and glutamine 176. The 'KMSKS' region motif lies at 232-236 (KFGKT). Lysine 235 serves as a coordination point for ATP. One can recognise an S4 RNA-binding domain in the interval 354–412 (KDLQEALVLSSLAQSRTQAKNMIISNSISINTKKIVNKNYIIDDNDKLFNQFTLLSRGK).

It belongs to the class-I aminoacyl-tRNA synthetase family. TyrS type 1 subfamily. As to quaternary structure, homodimer.

The protein localises to the cytoplasm. The enzyme catalyses tRNA(Tyr) + L-tyrosine + ATP = L-tyrosyl-tRNA(Tyr) + AMP + diphosphate + H(+). In terms of biological role, catalyzes the attachment of tyrosine to tRNA(Tyr) in a two-step reaction: tyrosine is first activated by ATP to form Tyr-AMP and then transferred to the acceptor end of tRNA(Tyr). This is Tyrosine--tRNA ligase from Buchnera aphidicola subsp. Schizaphis graminum (strain Sg).